Consider the following 255-residue polypeptide: tRNA pseudouridine synthase A (255 aa).

Aspartate 52 acts as the Nucleophile in catalysis. Tyrosine 111 contacts substrate.

Belongs to the tRNA pseudouridine synthase TruA family. In terms of assembly, homodimer.

It carries out the reaction uridine(38/39/40) in tRNA = pseudouridine(38/39/40) in tRNA. Formation of pseudouridine at positions 38, 39 and 40 in the anticodon stem and loop of transfer RNAs. This chain is tRNA pseudouridine synthase A, found in Cereibacter sphaeroides (strain ATCC 17029 / ATH 2.4.9) (Rhodobacter sphaeroides).